A 255-amino-acid polypeptide reads, in one-letter code: Homeobox protein DLX-1 (255 aa).

A compositionally biased stretch (polar residues) spans 1 to 14 (MTMTTMPESLNSPV). Disordered regions lie at residues 1–38 (MTMT…MSHG) and 95–118 (SLAQ…EGGE). Residues 25–36 (PPNQQMSPSPMS) show a composition bias toward low complexity. The span at 100–112 (RLEDPGADSEKST) shows a compositional bias: basic and acidic residues. A DNA-binding region (homeobox) is located at residues 128–187 (IRKPRTIYSSLQLQALNRRFQQTQYLALPERAELAASLGLTQTQVKIWFQNKRSKFKKLM). The segment at 204-230 (ALSAGSPPVPPGWNPNSSSGKGSGGNA) is disordered.

Belongs to the distal-less homeobox family. As to quaternary structure, interacts with SMAD4 (via homeobox DNA-binding domain). Interacts (via homeobox DNA-binding domain) with POU4F2; this interaction suppresses DLX1-mediated transcriptional activity in postnatal retina and enhances retinal ganglion cell (RGC) differentiation. Expressed in hematopoietic cell lines.

It is found in the nucleus. Its function is as follows. Plays a role as a transcriptional activator or repressor. Inhibits several cytokine signaling pathways, such as TGFB1, activin-A/INHBA and BMP4 by interfering with the transcriptional stimulatory activity of transcription factors, such as MSX2, FAST2, SMAD2 and SMAD3 during hematopoietic cell differentiation. Plays a role in terminal differentiation of interneurons, such as amacrine and bipolar cells in the developing retina. Likely to play a regulatory role in the development of the ventral forebrain. May play a role in craniofacial patterning and morphogenesis and may be involved in the early development of diencephalic subdivisions. This chain is Homeobox protein DLX-1 (DLX1), found in Homo sapiens (Human).